The sequence spans 450 residues: UDP-N-acetylmuramoylalanine--D-glutamate ligase (450 aa).

Residue 115–121 (GTNGKTT) coordinates ATP.

Belongs to the MurCDEF family.

The protein resides in the cytoplasm. The enzyme catalyses UDP-N-acetyl-alpha-D-muramoyl-L-alanine + D-glutamate + ATP = UDP-N-acetyl-alpha-D-muramoyl-L-alanyl-D-glutamate + ADP + phosphate + H(+). It functions in the pathway cell wall biogenesis; peptidoglycan biosynthesis. Functionally, cell wall formation. Catalyzes the addition of glutamate to the nucleotide precursor UDP-N-acetylmuramoyl-L-alanine (UMA). The polypeptide is UDP-N-acetylmuramoylalanine--D-glutamate ligase (Caldanaerobacter subterraneus subsp. tengcongensis (strain DSM 15242 / JCM 11007 / NBRC 100824 / MB4) (Thermoanaerobacter tengcongensis)).